The chain runs to 200 residues: Ribonuclease HII (200 aa).

An RNase H type-2 domain is found at 1–200 (MRYGGVDEAG…EINKKLTDFI (200 aa)). 3 residues coordinate a divalent metal cation: aspartate 7, glutamate 8, and aspartate 99.

This sequence belongs to the RNase HII family. Mn(2+) is required as a cofactor. Mg(2+) serves as cofactor.

The protein resides in the cytoplasm. The enzyme catalyses Endonucleolytic cleavage to 5'-phosphomonoester.. Its function is as follows. Endonuclease that specifically degrades the RNA of RNA-DNA hybrids. In Nanoarchaeum equitans (strain Kin4-M), this protein is Ribonuclease HII.